We begin with the raw amino-acid sequence, 269 residues long: Ribosomal RNA small subunit methyltransferase A (269 aa).

S-adenosyl-L-methionine contacts are provided by His-12, Leu-14, Gly-39, Glu-60, Asp-81, and Asn-103.

The protein belongs to the class I-like SAM-binding methyltransferase superfamily. rRNA adenine N(6)-methyltransferase family. RsmA subfamily.

The protein localises to the cytoplasm. It catalyses the reaction adenosine(1518)/adenosine(1519) in 16S rRNA + 4 S-adenosyl-L-methionine = N(6)-dimethyladenosine(1518)/N(6)-dimethyladenosine(1519) in 16S rRNA + 4 S-adenosyl-L-homocysteine + 4 H(+). Functionally, specifically dimethylates two adjacent adenosines (A1518 and A1519) in the loop of a conserved hairpin near the 3'-end of 16S rRNA in the 30S particle. May play a critical role in biogenesis of 30S subunits. The sequence is that of Ribosomal RNA small subunit methyltransferase A from Leptothrix cholodnii (strain ATCC 51168 / LMG 8142 / SP-6) (Leptothrix discophora (strain SP-6)).